Here is a 471-residue protein sequence, read N- to C-terminus: Tetratricopeptide repeat protein 29 (471 aa).

TPR repeat units lie at residues 92-131 (DKLP…EAAE), 136-173 (YEEV…AQLI), 182-215 (AEAE…THGR), 234-267 (VRTY…AREG), 274-307 (GEAS…STSL), 314-347 (GRAY…ARNN), and 354-387 (IRAC…AMEL). The interval 449-471 (ATEDNIYQLPDAEEETRRSPENQ) is disordered.

Expressed in spermatozoa (at protein level).

It localises to the cytoplasm. The protein localises to the cytoskeleton. It is found in the flagellum axoneme. In terms of biological role, axonemal protein which is implicated in axonemal and/or peri-axonemal structure assembly and regulates flagellum assembly and beating and therefore sperm motility. The chain is Tetratricopeptide repeat protein 29 (Ttc29) from Mus musculus (Mouse).